Here is a 571-residue protein sequence, read N- to C-terminus: Phosphoribosylaminoimidazole carboxylase (571 aa).

Serine 37 carries the post-translational modification Phosphoserine. Residues 110–298 (KEHLIKNGIA…QFEAHLRSIL (189 aa)) enclose the ATP-grasp domain. 138 to 193 (GRDLGFPFVLKSRTLAYDGRGNFVVKNKEMIPEALEVLKDRPLYAEKWAPFTKELA) is a binding site for ATP.

The protein in the C-terminal section; belongs to the AIR carboxylase family. Class I subfamily.

It catalyses the reaction 5-amino-1-(5-phospho-D-ribosyl)imidazole-4-carboxylate + H(+) = 5-amino-1-(5-phospho-beta-D-ribosyl)imidazole + CO2. Its pathway is purine metabolism; IMP biosynthesis via de novo pathway; 5-amino-1-(5-phospho-D-ribosyl)imidazole-4-carboxylate from 5-amino-1-(5-phospho-D-ribosyl)imidazole (carboxylase route): step 1/1. The chain is Phosphoribosylaminoimidazole carboxylase (ADE2) from Saccharomyces cerevisiae (strain ATCC 204508 / S288c) (Baker's yeast).